A 256-amino-acid chain; its full sequence is 3-hydroxy-5-phosphonooxypentane-2,4-dione thiolase (256 aa).

The active-site Schiff-base intermediate with substrate is Lys168.

Belongs to the DeoC/FbaB aldolase family. As to quaternary structure, homodecamer.

The protein resides in the cytoplasm. The catalysed reaction is dihydroxyacetone phosphate + acetyl-CoA = 3-hydroxy-2,4-dioxopentyl phosphate + CoA. Its function is as follows. Involved in the degradation of phospho-AI-2, thereby terminating induction of the lsr operon and closing the AI-2 signaling cycle. Catalyzes the transfer of an acetyl moiety from 3-hydroxy-5-phosphonooxypentane-2,4-dione to CoA to form glycerone phosphate and acetyl-CoA. The sequence is that of 3-hydroxy-5-phosphonooxypentane-2,4-dione thiolase (lsrF) from Shigella flexneri serotype 5b (strain 8401).